A 386-amino-acid polypeptide reads, in one-letter code: Putrescine N-methyltransferase 4 (386 aa).

3 stretches are compositionally biased toward polar residues: residues 1 to 14 (MEVI…STIF), 23 to 48 (GHQS…GHHN), and 57 to 87 (HQNG…NGNE). A disordered region spans residues 1–87 (MEVISTNTNG…GTISHDNGNE (87 aa)). A PABS domain is found at 97–334 (LGWFSEFSAL…GVIGYMLCST (238 aa)). Residues glutamine 128, glutamate 203, and 234–235 (DG) each bind S-adenosyl-L-methionine. Aspartate 253 serves as the catalytic Proton acceptor. Tyrosine 322 is a binding site for S-adenosyl-L-methionine.

This sequence belongs to the class I-like SAM-binding methyltransferase superfamily. Putrescine methyltransferase family. Predominantly expressed in roots.

It carries out the reaction putrescine + S-adenosyl-L-methionine = N-methylputrescine + S-adenosyl-L-homocysteine + H(+). It participates in alkaloid biosynthesis; nicotine biosynthesis. Its function is as follows. Involved in the biosynthesis of pyridine alkaloid natural products, leading mainly to the production of anabasine, anatabine, nicotine and nornicotine, effective deterrents against herbivores with antiparasitic and pesticide properties (neurotoxins); nornicotine serves as the precursor in the synthesis of the carcinogen compound N'-nitrosonornicotine (NNN). Methyltransferase that mediates the conversion of putrescine to N-methylputrescine. Promotes leaves ripening. The protein is Putrescine N-methyltransferase 4 of Nicotiana tabacum (Common tobacco).